We begin with the raw amino-acid sequence, 1319 residues long: Chitin-binding domain protein cbd-1 (1319 aa).

The first 19 residues, 1–19 (MGPQLATVSLLLLTFFSNS), serve as a signal peptide directing secretion. Chitin-binding type-2 domains are found at residues 28 to 83 (ATEC…ECRV), 96 to 141 (EFDC…TQDC), and 190 to 236 (DFDC…QSCD). 3 disulfide bridges follow: Cys61–Cys72, Cys128–Cys141, and Cys222–Cys235. Residues 250-271 (YSTSTITTPQEDDSEYSSTTSA) are disordered. Residues 304 to 357 (PFVCQEGQVNSFGMCSSRFNRCQNNSVRSKQCPVNTLFESSLVMCVFDLPQCQP) enclose the Chitin-binding type-2 4 domain. Asn327 carries an N-linked (GlcNAc...) asparagine glycan. A disulfide bridge connects residues Cys335 and Cys348. A disordered region spans residues 504 to 524 (KNRHSKKQLGPHEDPDGYDDE). Basic and acidic residues predominate over residues 513–524 (GPHEDPDGYDDE). Positions 566–614 (NKDCQQYTTPTFLTFGDCFDQFIFCSGNGINRMAACPIGETFDKTLRSC) constitute a Chitin-binding type-2 5 domain. A disulfide bond links Cys601 and Cys614. The tract at residues 649 to 682 (VTTQSTWNDQPSTTQAPNSYESYTTQYSSNDVPS) is disordered. Chitin-binding type-2 domains are found at residues 689–745 (GDRC…ECGS), 782–838 (GDRC…KCQT), and 883–942 (VDTC…ACDE). Cys721 and Cys734 are oxidised to a cystine. A disordered region spans residues 742–764 (ECGSQGSTSSPVITTPGQDQSSN). Residues 745-764 (SQGSTSSPVITTPGQDQSSN) are compositionally biased toward polar residues. 2 disulfides stabilise this stretch: Cys814–Cys827 and Cys916–Cys929. Residues 984-995 (TGSTKYSTTDSG) show a composition bias toward polar residues. A disordered region spans residues 984–1031 (TGSTKYSTTDSGEYTIPYGDETTSTRSYDRADNDSEDEEEDDVEHDQK). The N-linked (GlcNAc...) asparagine glycan is linked to Asn1016. Positions 1017–1027 (DSEDEEEDDVE) are enriched in acidic residues. Chitin-binding type-2 domains are found at residues 1029–1081 (DQKC…GCGK), 1105–1163 (EGRC…ACTV), 1179–1237 (SAFC…GCEN), and 1242–1298 (NGEC…SCSG). Cystine bridges form between Cys1060/Cys1073, Cys1139/Cys1152, Cys1213/Cys1226, and Cys1274/Cys1287. Residues 1297 to 1312 (SGQASDSNSSYGSSTY) show a composition bias toward low complexity. The interval 1297 to 1319 (SGQASDSNSSYGSSTYNDDKSGY) is disordered. Residue Asn1304 is glycosylated (N-linked (GlcNAc...) asparagine).

It localises to the secreted. The protein localises to the extracellular space. It is found in the extracellular matrix. Functionally, in unfertilized oocytes, maintains egg-1 and egg-2 at the plasma membrane together with chitin synthase chs-1 and kinase mbk-2. Essential for the formation of a continuous and cohesive chitin layer following fertilization. The chain is Chitin-binding domain protein cbd-1 from Caenorhabditis elegans.